We begin with the raw amino-acid sequence, 280 residues long: 4-diphosphocytidyl-2-C-methyl-D-erythritol kinase (280 aa).

The active site involves Lys11. Residue 95–105 participates in ATP binding; the sequence is PVGAGLGGGSS. Asp137 is an active-site residue.

It belongs to the GHMP kinase family. IspE subfamily.

The catalysed reaction is 4-CDP-2-C-methyl-D-erythritol + ATP = 4-CDP-2-C-methyl-D-erythritol 2-phosphate + ADP + H(+). The protein operates within isoprenoid biosynthesis; isopentenyl diphosphate biosynthesis via DXP pathway; isopentenyl diphosphate from 1-deoxy-D-xylulose 5-phosphate: step 3/6. Functionally, catalyzes the phosphorylation of the position 2 hydroxy group of 4-diphosphocytidyl-2C-methyl-D-erythritol. The chain is 4-diphosphocytidyl-2-C-methyl-D-erythritol kinase from Citrifermentans bemidjiense (strain ATCC BAA-1014 / DSM 16622 / JCM 12645 / Bem) (Geobacter bemidjiensis).